Consider the following 1432-residue polypeptide: Gag-Pol polyprotein (1432 aa).

A lipid anchor (N-myristoyl glycine; by host) is attached at Gly2. Positions 7 to 31 (ILSGGKLDDWEKIRLRPGGKKKYRI) are interaction with Gp41. An interaction with host CALM1 region spans residues 8–43 (LSGGKLDDWEKIRLRPGGKKKYRIKHLVWASRELDR). Positions 12–19 (KLDDWEKI) are interaction with host AP3D1. The tract at residues 14–33 (DDWEKIRLRPGGKKKYRIKH) is interaction with membrane phosphatidylinositol 4,5-bisphosphate and RNA. Residues 16–22 (WEKIRLR) carry the Nuclear export signal motif. Residues 26–32 (KKKYRIK) carry the Nuclear localization signal motif. Positions 73–77 (QEIKS) are interaction with membrane phosphatidylinositol 4,5-bisphosphate. Tyr132 is modified (phosphotyrosine; by host). The interaction with human PPIA/CYPA and NUP153 stretch occupies residues 189–227 (NTIGGHQAAMQMLKDTINEEAAEWDRVHPVHAGPIAPGQ). Residues 277 to 363 (YSPVSILDIR…GGPGHKARVL (87 aa)) form a dimerization/Multimerization of capsid protein p24 region. 2 consecutive CCHC-type zinc fingers follow at residues 389–406 (VKCF…NCRA) and 410–427 (KGCW…DCTE). Residues 443–483 (EARELSPEQTRANSPTSREPRARRGDPLPETGAEGQGTVSS) form a disordered region. The span at 449-459 (PEQTRANSPTS) shows a compositional bias: polar residues. Residues 460–469 (REPRARRGDP) are compositionally biased toward basic and acidic residues. A dimerization of protease region spans residues 486–490 (PQITL). Residues 505-574 (REALLDTGAD…TPVNIIGRNM (70 aa)) form the Peptidase A2 domain. Residue Asp510 is the For protease activity; shared with dimeric partner of the active site. 2 dimerization of protease regions span residues 534-540 (GIGGFIK) and 573-585 (NMLT…LNFP). In terms of domain architecture, Reverse transcriptase spans 628 to 818 (EGKISRVGPE…PPFLWMGYEL (191 aa)). Mg(2+)-binding residues include Asp694, Asp769, and Asp770. Residues 811 to 819 (FLWMGYELH) form an RT 'primer grip' region. A Tryptophan repeat motif motif is present at residues 982–998 (WETWWTDYWQATWIPEW). The RNase H type-1 domain occupies 1018–1141 (IMGAETFYVD…VDKLVSSGIR (124 aa)). Positions 1027, 1062, 1082, and 1133 each coordinate Mg(2+). The Integrase-type zinc-finger motif lies at 1147–1188 (DGIDKAQEDHEKYHSNWRAMASDFNLPPVVAKEIVASCDKCQ). The Zn(2+) site is built by His1156, His1160, Cys1184, and Cys1187. Positions 1198-1348 (VDCSPGIWQL…SAGERIIDII (151 aa)) constitute an Integrase catalytic domain. Asp1208, Asp1260, and Glu1296 together coordinate Mg(2+). A DNA-binding region (integrase-type) is located at residues 1367 to 1414 (FRVYYRDSRDPIWKGPAKLPWKGEGAVVIQDNSEIKVVPRRKAKIIRD).

In terms of assembly, homotrimer; further assembles as hexamers of trimers. Interacts with gp41 (via C-terminus). Interacts with host CALM1; this interaction induces a conformational change in the Matrix protein, triggering exposure of the myristate group. Interacts with host AP3D1; this interaction allows the polyprotein trafficking to multivesicular bodies during virus assembly. Part of the pre-integration complex (PIC) which is composed of viral genome, matrix protein, Vpr and integrase. Homodimer; the homodimer further multimerizes as homohexamers or homopentamers. Interacts with human PPIA/CYPA; This interaction stabilizes the capsid. Interacts with human NUP153. Interacts with host PDZD8; this interaction stabilizes the capsid. Interacts with monkey TRIM5; this interaction destabilizes the capsid. As to quaternary structure, homodimer, whose active site consists of two apposed aspartic acid residues. In terms of assembly, heterodimer of p66 RT and p51 RT (RT p66/p51). Heterodimerization of RT is essential for DNA polymerase activity. The overall folding of the subdomains is similar in p66 RT and p51 RT but the spatial arrangements of the subdomains are dramatically different. Homotetramer; may further associate as a homohexadecamer. Part of the pre-integration complex (PIC) which is composed of viral genome, matrix protein, Vpr and integrase. Interacts with human SMARCB1/INI1 and human PSIP1/LEDGF isoform 1. Interacts with human KPNA3; this interaction might play a role in nuclear import of the pre-integration complex. Interacts with human NUP153; this interaction might play a role in nuclear import of the pre-integration complex. Requires Mg(2+) as cofactor. Post-translationally, specific enzymatic cleavages by the viral protease yield mature proteins. The protease is released by autocatalytic cleavage. The polyprotein is cleaved during and after budding, this process is termed maturation. Proteolytic cleavage of p66 RT removes the RNase H domain to yield the p51 RT subunit. Nucleocapsid protein p7 might be further cleaved after virus entry. In terms of processing, tyrosine phosphorylated presumably in the virion by a host kinase. Phosphorylation is apparently not a major regulator of membrane association. Phosphorylated possibly by host MAPK1; this phosphorylation is necessary for Pin1-mediated virion uncoating. Post-translationally, methylated by host PRMT6, impairing its function by reducing RNA annealing and the initiation of reverse transcription.

It localises to the host cell membrane. The protein resides in the host endosome. It is found in the host multivesicular body. The protein localises to the virion membrane. Its subcellular location is the host nucleus. It localises to the host cytoplasm. The protein resides in the virion. It carries out the reaction Specific for a P1 residue that is hydrophobic, and P1' variable, but often Pro.. The catalysed reaction is Endohydrolysis of RNA in RNA/DNA hybrids. Three different cleavage modes: 1. sequence-specific internal cleavage of RNA. Human immunodeficiency virus type 1 and Moloney murine leukemia virus enzymes prefer to cleave the RNA strand one nucleotide away from the RNA-DNA junction. 2. RNA 5'-end directed cleavage 13-19 nucleotides from the RNA end. 3. DNA 3'-end directed cleavage 15-20 nucleotides away from the primer terminus.. The enzyme catalyses 3'-end directed exonucleolytic cleavage of viral RNA-DNA hybrid.. It catalyses the reaction DNA(n) + a 2'-deoxyribonucleoside 5'-triphosphate = DNA(n+1) + diphosphate. Its activity is regulated as follows. Protease: The viral protease is inhibited by many synthetic protease inhibitors (PIs), such as amprenavir, atazanavir, indinavir, loprinavir, nelfinavir, ritonavir and saquinavir. Use of protease inhibitors in tritherapy regimens permit more ambitious therapeutic strategies. Reverse transcriptase/ribonuclease H: RT can be inhibited either by nucleoside RT inhibitors (NRTIs) or by non nucleoside RT inhibitors (NNRTIs). NRTIs act as chain terminators, whereas NNRTIs inhibit DNA polymerization by binding a small hydrophobic pocket near the RT active site and inducing an allosteric change in this region. Classical NRTIs are abacavir, adefovir (PMEA), didanosine (ddI), lamivudine (3TC), stavudine (d4T), tenofovir (PMPA), zalcitabine (ddC), and zidovudine (AZT). Classical NNRTIs are atevirdine (BHAP U-87201E), delavirdine, efavirenz (DMP-266), emivirine (I-EBU), and nevirapine (BI-RG-587). The tritherapies used as a basic effective treatment of AIDS associate two NRTIs and one NNRTI. Functionally, mediates, with Gag polyprotein, the essential events in virion assembly, including binding the plasma membrane, making the protein-protein interactions necessary to create spherical particles, recruiting the viral Env proteins, and packaging the genomic RNA via direct interactions with the RNA packaging sequence (Psi). Gag-Pol polyprotein may regulate its own translation, by the binding genomic RNA in the 5'-UTR. At low concentration, the polyprotein would promote translation, whereas at high concentration, the polyprotein would encapsidate genomic RNA and then shut off translation. Its function is as follows. Targets the polyprotein to the plasma membrane via a multipartite membrane-binding signal, that includes its myristoylated N-terminus. Matrix protein is part of the pre-integration complex. Implicated in the release from host cell mediated by Vpu. Binds to RNA. Forms the conical core that encapsulates the genomic RNA-nucleocapsid complex in the virion. Most core are conical, with only 7% tubular. The core is constituted by capsid protein hexamer subunits. The core is disassembled soon after virion entry. Host restriction factors such as TRIM5-alpha or TRIMCyp bind retroviral capsids and cause premature capsid disassembly, leading to blocks in reverse transcription. Capsid restriction by TRIM5 is one of the factors which restricts HIV-1 to the human species. Host PIN1 apparently facilitates the virion uncoating. On the other hand, interactions with PDZD8 or CYPA stabilize the capsid. In terms of biological role, encapsulates and protects viral dimeric unspliced genomic RNA (gRNA). Binds these RNAs through its zinc fingers. Acts as a nucleic acid chaperone which is involved in rearangement of nucleic acid secondary structure during gRNA retrotranscription. Also facilitates template switch leading to recombination. As part of the polyprotein, participates in gRNA dimerization, packaging, tRNA incorporation and virion assembly. Functionally, aspartyl protease that mediates proteolytic cleavages of Gag and Gag-Pol polyproteins during or shortly after the release of the virion from the plasma membrane. Cleavages take place as an ordered, step-wise cascade to yield mature proteins. This process is called maturation. Displays maximal activity during the budding process just prior to particle release from the cell. Also cleaves Nef and Vif, probably concomitantly with viral structural proteins on maturation of virus particles. Hydrolyzes host EIF4GI and PABP1 in order to shut off the capped cellular mRNA translation. The resulting inhibition of cellular protein synthesis serves to ensure maximal viral gene expression and to evade host immune response. Also mediates cleavage of host YTHDF3. Mediates cleavage of host CARD8, thereby activating the CARD8 inflammasome, leading to the clearance of latent HIV-1 in patient CD4(+) T-cells after viral reactivation; in contrast, HIV-1 can evade CARD8-sensing when its protease remains inactive in infected cells prior to viral budding. Its function is as follows. Multifunctional enzyme that converts the viral RNA genome into dsDNA in the cytoplasm, shortly after virus entry into the cell. This enzyme displays a DNA polymerase activity that can copy either DNA or RNA templates, and a ribonuclease H (RNase H) activity that cleaves the RNA strand of RNA-DNA heteroduplexes in a partially processive 3' to 5' endonucleasic mode. Conversion of viral genomic RNA into dsDNA requires many steps. A tRNA(3)-Lys binds to the primer-binding site (PBS) situated at the 5'-end of the viral RNA. RT uses the 3' end of the tRNA primer to perform a short round of RNA-dependent minus-strand DNA synthesis. The reading proceeds through the U5 region and ends after the repeated (R) region which is present at both ends of viral RNA. The portion of the RNA-DNA heteroduplex is digested by the RNase H, resulting in a ssDNA product attached to the tRNA primer. This ssDNA/tRNA hybridizes with the identical R region situated at the 3' end of viral RNA. This template exchange, known as minus-strand DNA strong stop transfer, can be either intra- or intermolecular. RT uses the 3' end of this newly synthesized short ssDNA to perform the RNA-dependent minus-strand DNA synthesis of the whole template. RNase H digests the RNA template except for two polypurine tracts (PPTs) situated at the 5'-end and near the center of the genome. It is not clear if both polymerase and RNase H activities are simultaneous. RNase H probably can proceed both in a polymerase-dependent (RNA cut into small fragments by the same RT performing DNA synthesis) and a polymerase-independent mode (cleavage of remaining RNA fragments by free RTs). Secondly, RT performs DNA-directed plus-strand DNA synthesis using the PPTs that have not been removed by RNase H as primers. PPTs and tRNA primers are then removed by RNase H. The 3' and 5' ssDNA PBS regions hybridize to form a circular dsDNA intermediate. Strand displacement synthesis by RT to the PBS and PPT ends produces a blunt ended, linear dsDNA copy of the viral genome that includes long terminal repeats (LTRs) at both ends. Catalyzes viral DNA integration into the host chromosome, by performing a series of DNA cutting and joining reactions. This enzyme activity takes place after virion entry into a cell and reverse transcription of the RNA genome in dsDNA. The first step in the integration process is 3' processing. This step requires a complex comprising the viral genome, matrix protein, Vpr and integrase. This complex is called the pre-integration complex (PIC). The integrase protein removes 2 nucleotides from each 3' end of the viral DNA, leaving recessed CA OH's at the 3' ends. In the second step, the PIC enters cell nucleus. This process is mediated through integrase and Vpr proteins, and allows the virus to infect a non dividing cell. This ability to enter the nucleus is specific of lentiviruses, other retroviruses cannot and rely on cell division to access cell chromosomes. In the third step, termed strand transfer, the integrase protein joins the previously processed 3' ends to the 5' ends of strands of target cellular DNA at the site of integration. The 5'-ends are produced by integrase-catalyzed staggered cuts, 5 bp apart. A Y-shaped, gapped, recombination intermediate results, with the 5'-ends of the viral DNA strands and the 3' ends of target DNA strands remaining unjoined, flanking a gap of 5 bp. The last step is viral DNA integration into host chromosome. This involves host DNA repair synthesis in which the 5 bp gaps between the unjoined strands are filled in and then ligated. Since this process occurs at both cuts flanking the HIV genome, a 5 bp duplication of host DNA is produced at the ends of HIV-1 integration. Alternatively, Integrase may catalyze the excision of viral DNA just after strand transfer, this is termed disintegration. The polypeptide is Gag-Pol polyprotein (gag-pol) (Human immunodeficiency virus type 1 group M subtype J (isolate SE9280) (HIV-1)).